Reading from the N-terminus, the 100-residue chain is Biogenesis of lysosome-related organelles complex 1 subunit CNL1 (100 aa).

Positions Ser-25–Val-46 form a coiled coil.

It belongs to the BLOC1S4 family. In terms of assembly, component of the biogenesis of lysosome-related organelles complex-1 (BLOC-1).

The protein resides in the cytoplasm. Its function is as follows. Component of the biogenesis of lysosome-related organelles complex-1 (BLOC-1), a complex that is involved in endosomal cargo sorting. The sequence is that of Biogenesis of lysosome-related organelles complex 1 subunit CNL1 (CLN1) from Candida glabrata (strain ATCC 2001 / BCRC 20586 / JCM 3761 / NBRC 0622 / NRRL Y-65 / CBS 138) (Yeast).